The following is a 199-amino-acid chain: Nuclear protein UL4 (199 aa).

Belongs to the alphaherpesvirinae HHV-1 UL4 family.

The protein localises to the host nucleus. In Homo sapiens (Human), this protein is Nuclear protein UL4.